We begin with the raw amino-acid sequence, 255 residues long: Hemin import ATP-binding protein HmuV (255 aa).

One can recognise an ABC transporter domain in the interval 2–238 (LRAHNLHIRR…ESLKAVFGLE (237 aa)). ATP is bound at residue 34 to 41 (GPNGAGKS).

This sequence belongs to the ABC transporter superfamily. Heme (hemin) importer (TC 3.A.1.14.5) family. The complex is composed of two ATP-binding proteins (HmuV), two transmembrane proteins (HmuU) and a solute-binding protein (HmuT).

The protein resides in the cell inner membrane. Functionally, part of the ABC transporter complex HmuTUV involved in hemin import. Responsible for energy coupling to the transport system. This Pseudomonas fluorescens (strain Pf0-1) protein is Hemin import ATP-binding protein HmuV.